The following is a 968-amino-acid chain: MPFTLGQRWISDTESELGLGTVVAVDARTVTLLFPSTGENRLYARSDSPVTRVMFNPGDTITSHDGWQMQVEEVKEENGLLTYIGTRLDTEESGVALREVFLDSKLVFSKPQDRLFAGQIDRMDRFALRYRARKYSSEQFRMPYSGLRGQRTSLIPHQLNIAHDVGRRHAPRVLLADEVGLGKTIEAGMILHQQLLSGAAERVLIIVPETLQHQWLVEMLRRFNLRFALFDDERYAEAQHDAYNPFDTEQLVICSLDFARRSKQRLEHLCEAEWDLLVVDEAHHLVWSEDAPSREYQAIEQLAEHMPGVLLLTATPEQLGMESHFARLRLLDPNRFHDFAQFVEEQKNYRPVADAVAMLLAGNKLSNDELNMLGEMIGEQDIEPLLQAANSDSEDAQSARQELVSMLMDRHGTSRVLFRNTRNGVKGFPKRELHTIKLPLPTQYQTAIKVSGIMGARKSAEDRARDMLYPERIYQEFEGDNATWWNFDPRVEWLMGYLTSHRSQKVLVICAKAATALQLEQVLREREGIRAAVFHEGMSIIERDRAAAWFAEEDTGAQVLLCSEIGSEGRNFQFASHMVMFDLPFNPDLLEQRIGRLDRIGQAHDIQIHVPYLEKTAQSVLVRWYHEGLDAFEHTCPTGRTIYDSVYNDLINYLASPDQTEGFDDLIKNCREQHEALKAQLEQGRDRLLEIHSNGGEKAQALAESIEEQDDDTNLIAFAMNLLDIIGINQDDRGDNMIVLTPSDHMLVPDFPGLSEDGITITFDREVALAREDAQFITWEHPLIRNGLDLILSGDTGSSTISLLKNKALPVGTLLVELIYVVEAQAPKQLQLNRFLPPTPVRMLLDKNGNNLAAQVEFETFNRQLNAVNRHTGSKLVNAVQQDVHAILQLGEAQIEKSARALIDAARNEADEKLSAELSRLEALRAVNPNIRDDELTAIESNRQQVMESLDQAGWRLDALRLIVVTHQ.

Positions 164-334 constitute a Helicase ATP-binding domain; sequence DVGRRHAPRV…FARLRLLDPN (171 aa). 177-184 serves as a coordination point for ATP; that stretch reads DEVGLGKT. A DEAH box motif is present at residues 280–283; the sequence is DEAH. Residues 490–662 enclose the Helicase C-terminal domain; the sequence is RVEWLMGYLT…YLASPDQTEG (173 aa).

The protein belongs to the SNF2/RAD54 helicase family. RapA subfamily. Interacts with the RNAP. Has a higher affinity for the core RNAP than for the holoenzyme. Its ATPase activity is stimulated by binding to RNAP.

Transcription regulator that activates transcription by stimulating RNA polymerase (RNAP) recycling in case of stress conditions such as supercoiled DNA or high salt concentrations. Probably acts by releasing the RNAP, when it is trapped or immobilized on tightly supercoiled DNA. Does not activate transcription on linear DNA. Probably not involved in DNA repair. The polypeptide is RNA polymerase-associated protein RapA (Shigella boydii serotype 4 (strain Sb227)).